Here is a 332-residue protein sequence, read N- to C-terminus: Fructose-1,6-bisphosphatase class 1 (332 aa).

Positions 89, 110, 112, and 113 each coordinate Mg(2+). Substrate-binding positions include 113–116 (DGSS), Asn206, Tyr239, 257–259 (YLY), and Lys269. Glu275 contributes to the Mg(2+) binding site.

It belongs to the FBPase class 1 family. As to quaternary structure, homotetramer. The cofactor is Mg(2+).

The protein resides in the cytoplasm. It catalyses the reaction beta-D-fructose 1,6-bisphosphate + H2O = beta-D-fructose 6-phosphate + phosphate. Its pathway is carbohydrate biosynthesis; gluconeogenesis. The protein is Fructose-1,6-bisphosphatase class 1 of Citrobacter koseri (strain ATCC BAA-895 / CDC 4225-83 / SGSC4696).